Reading from the N-terminus, the 470-residue chain is Cannabinoid receptor 1 (470 aa).

Topologically, residues 1-121 (MKSILDGLAD…TPSQQLVIAA (121 aa)) are extracellular. A required for mitochondrial localization region spans residues 2 to 23 (KSILDGLADTTFRTITTDLLYL). Residues Asn78 and Asn84 are each glycosylated (N-linked (GlcNAc...) asparagine). The helical transmembrane segment at 122-142 (LSIILGTFTVLENMLVLVVIV) threads the bilayer. Over 143–154 (QSRSLRCRPSYH) the chain is Cytoplasmic. The chain crosses the membrane as a helical span at residues 155–175 (FIGSLAVADLLGSVIFVYSFV). Over 176–187 (DFHVFHRKDSPN) the chain is Extracellular. Residues 188 to 208 (VFLFKLGGVTASFTASVGSLF) traverse the membrane as a helical segment. Over 209 to 232 (LTAIDRYISIHRPMSYKRIVTRTK) the chain is Cytoplasmic. The chain crosses the membrane as a helical span at residues 233–253 (AVIAFCMMWTIAIVIAVLPLF). Topologically, residues 254–277 (GWNCIKLRSVCSDIFPLIDETYLM) are extracellular. The helical transmembrane segment at 278–298 (FWIGVTSVLLLFIVYAYMYIL) threads the bilayer. Residues 299–344 (WKAHNHAVRMLQRGTQKSIIVHTSEDGKVHITRPDQTRMDIRLAKT) lie on the Cytoplasmic side of the membrane. A helical membrane pass occupies residues 345–365 (LVLILVVLIICWGPLMAIMVY). Residues 366-377 (DVFGKINKTIKT) lie on the Extracellular side of the membrane. The N-linked (GlcNAc...) asparagine glycan is linked to Asn372. A helical transmembrane segment spans residues 378 to 398 (VFAFCSVLCLLNSTVNPIIYA). The Cytoplasmic portion of the chain corresponds to 399 to 470 (LRSKDLRNAF…VSTDTSAEAV (72 aa)). The S-palmitoyl cysteine moiety is linked to residue Cys415.

This sequence belongs to the G-protein coupled receptor 1 family. Post-translationally, palmitoylation at Cys-415 is important for recruitment at both plasma membrane and lipid rafts and association with G protein alpha subunits. As to expression, expressed in neurons, especially in the olfactory bulbs, telencephalic pallium, and hypothalamus and also in the midbrain and hindbrain (in the mesencephalic tegmentum and dorsolateral rhombencephalon). Expressed also in the spinal cord.

Its subcellular location is the cell membrane. The protein resides in the mitochondrion outer membrane. It is found in the cell projection. The protein localises to the axon. It localises to the presynapse. Functionally, G-protein coupled receptor for cannabinoids. Mediates many cannabinoid-induced effects in the central nervous system (CNS), as well as in peripheral tissues. Regulates cellular respiration and energy production in response to cannabinoids. Signaling typically involves reduction in cyclic AMP. In Xenopus laevis (African clawed frog), this protein is Cannabinoid receptor 1 (cnr1).